Here is a 270-residue protein sequence, read N- to C-terminus: Protein tonB2 (270 aa).

Topologically, residues 1-51 (MATPQPVDARTQPWRETPGGDLVALGRPVRQALHLVRHNPAQGRVLSRRET) are cytoplasmic. The helical transmembrane segment at 52–69 (ILLVLFALTLHGAVIHWL) threads the bilayer. At 70-270 (SQQRTPALPE…VSVPIDFKLN (201 aa)) the chain is on the periplasmic side. Residues 80 to 187 (VPPQVPPMTI…LTPPSANAGY (108 aa)) are disordered. Residues 94–118 (PAPPVVEPPPPEPLPPVVEEPPPPV) show a composition bias toward pro residues. Over residues 133-143 (PKPKPKPKPQP) the composition is skewed to basic residues. The segment covering 144–180 (RPKPAPKAVEPAPPAPPQPAAPPAPPAPAAAPAPLTP) has biased composition (pro residues). One can recognise a TonB C-terminal domain in the interval 180–270 (PPSANAGYLH…VSVPIDFKLN (91 aa)).

Belongs to the TonB family. Homodimer. Forms a complex with the accessory proteins ExbB and ExbD.

The protein resides in the cell inner membrane. Its function is as follows. Interacts with outer membrane receptor proteins that carry out high-affinity binding and energy dependent uptake into the periplasmic space of specific substrates. It could act to transduce energy from the cytoplasmic membrane to specific energy-requiring processes in the outer membrane, resulting in the release into the periplasm of ligands bound by these outer membrane proteins. In Pseudomonas aeruginosa (strain ATCC 15692 / DSM 22644 / CIP 104116 / JCM 14847 / LMG 12228 / 1C / PRS 101 / PAO1), this protein is Protein tonB2 (tonB2).